Reading from the N-terminus, the 338-residue chain is Phenylalanine--tRNA ligase alpha subunit (338 aa).

Position 252 (glutamate 252) interacts with Mg(2+).

The protein belongs to the class-II aminoacyl-tRNA synthetase family. Phe-tRNA synthetase alpha subunit type 1 subfamily. Tetramer of two alpha and two beta subunits. Mg(2+) serves as cofactor.

It localises to the cytoplasm. It catalyses the reaction tRNA(Phe) + L-phenylalanine + ATP = L-phenylalanyl-tRNA(Phe) + AMP + diphosphate + H(+). The chain is Phenylalanine--tRNA ligase alpha subunit from Pseudomonas fluorescens (strain SBW25).